Reading from the N-terminus, the 237-residue chain is Probable transcriptional regulatory protein MCAP_0598 (237 aa).

Belongs to the TACO1 family.

The protein resides in the cytoplasm. The chain is Probable transcriptional regulatory protein MCAP_0598 from Mycoplasma capricolum subsp. capricolum (strain California kid / ATCC 27343 / NCTC 10154).